Here is a 239-residue protein sequence, read N- to C-terminus: 7-cyano-7-deazaguanine synthase (239 aa).

13 to 23 (FSGGQDSTTCL) provides a ligand contact to ATP. Residues cysteine 192, cysteine 201, cysteine 204, and cysteine 207 each coordinate Zn(2+).

The protein belongs to the QueC family. Zn(2+) serves as cofactor.

The enzyme catalyses 7-carboxy-7-deazaguanine + NH4(+) + ATP = 7-cyano-7-deazaguanine + ADP + phosphate + H2O + H(+). It participates in purine metabolism; 7-cyano-7-deazaguanine biosynthesis. Its function is as follows. Catalyzes the ATP-dependent conversion of 7-carboxy-7-deazaguanine (CDG) to 7-cyano-7-deazaguanine (preQ(0)). The sequence is that of 7-cyano-7-deazaguanine synthase from Shewanella sp. (strain MR-7).